Reading from the N-terminus, the 226-residue chain is 2,3-bisphosphoglycerate-dependent phosphoglycerate mutase (226 aa).

Substrate contacts are provided by residues 8 to 15, 21 to 22, R58, 109 to 112, K120, 136 to 137, and 180 to 181; these read RHGQSVWN, TG, ERMY, RR, and GN. H9 acts as the Tele-phosphohistidine intermediate in catalysis. Residue E109 is the Proton donor/acceptor of the active site.

The protein belongs to the phosphoglycerate mutase family. BPG-dependent PGAM subfamily.

The catalysed reaction is (2R)-2-phosphoglycerate = (2R)-3-phosphoglycerate. Its pathway is carbohydrate degradation; glycolysis; pyruvate from D-glyceraldehyde 3-phosphate: step 3/5. In terms of biological role, catalyzes the interconversion of 2-phosphoglycerate and 3-phosphoglycerate. The chain is 2,3-bisphosphoglycerate-dependent phosphoglycerate mutase from Chlamydia trachomatis serovar L2 (strain ATCC VR-902B / DSM 19102 / 434/Bu).